The sequence spans 106 residues: Small ribosomal subunit protein uS10 (106 aa).

The protein belongs to the universal ribosomal protein uS10 family. Part of the 30S ribosomal subunit.

Its function is as follows. Involved in the binding of tRNA to the ribosomes. The chain is Small ribosomal subunit protein uS10 from Wolbachia pipientis subsp. Culex pipiens (strain wPip).